The following is a 153-amino-acid chain: SsrA-binding protein (153 aa).

This sequence belongs to the SmpB family.

The protein localises to the cytoplasm. Its function is as follows. Required for rescue of stalled ribosomes mediated by trans-translation. Binds to transfer-messenger RNA (tmRNA), required for stable association of tmRNA with ribosomes. tmRNA and SmpB together mimic tRNA shape, replacing the anticodon stem-loop with SmpB. tmRNA is encoded by the ssrA gene; the 2 termini fold to resemble tRNA(Ala) and it encodes a 'tag peptide', a short internal open reading frame. During trans-translation Ala-aminoacylated tmRNA acts like a tRNA, entering the A-site of stalled ribosomes, displacing the stalled mRNA. The ribosome then switches to translate the ORF on the tmRNA; the nascent peptide is terminated with the 'tag peptide' encoded by the tmRNA and targeted for degradation. The ribosome is freed to recommence translation, which seems to be the essential function of trans-translation. The protein is SsrA-binding protein of Cytophaga hutchinsonii (strain ATCC 33406 / DSM 1761 / CIP 103989 / NBRC 15051 / NCIMB 9469 / D465).